Consider the following 151-residue polypeptide: Arginine repressor (151 aa).

The protein belongs to the ArgR family.

The protein resides in the cytoplasm. It functions in the pathway amino-acid biosynthesis; L-arginine biosynthesis [regulation]. Its function is as follows. Regulates arginine biosynthesis genes. This chain is Arginine repressor, found in Clostridium novyi (strain NT).